Reading from the N-terminus, the 370-residue chain is Actin-related protein 2/3 complex subunit 1A-B (370 aa).

WD repeat units lie at residues 6–45 (FLLE…WVKC), 50–89 (EHNG…WKPT), 140–179 (PIRS…VDEK), 202–241 (SSGG…SVSQ), 244–284 (TEFL…TFVS), and 322–365 (LHQN…SYIQ).

This sequence belongs to the WD repeat ARPC1 family. Component of the Arp2/3 complex.

It localises to the cytoplasm. The protein resides in the cytoskeleton. It is found in the nucleus. Its function is as follows. Probably functions as a component of the Arp2/3 complex which is involved in regulation of actin polymerization and together with an activating nucleation-promoting factor (NPF) mediates the formation of branched actin networks. In addition to its role in the cytoplasmic cytoskeleton, the Arp2/3 complex also promotes actin polymerization in the nucleus, thereby regulating gene transcription and repair of damaged DNA. The sequence is that of Actin-related protein 2/3 complex subunit 1A-B (arpc1a-b) from Xenopus laevis (African clawed frog).